We begin with the raw amino-acid sequence, 178 residues long: Fucolectin-1 (178 aa).

An N-terminal signal peptide occupies residues 1-20 (MKVKTIMLLFQILAISTIKS). The segment at 29-178 (QENVAVRGKA…VEVNALLPVN (150 aa)) is F5/8 type C-like. Ca(2+) contacts are provided by Asp59, Asn61, and Ser70. 3 disulfides stabilise this stretch: Cys71–Cys167, Cys103–Cys104, and Cys129–Cys145. The alpha-L-fucose site is built by His73 and Arg100. Positions 100–102 (RGD) match the Cell attachment site motif. Arg107 is an alpha-L-fucose binding site. Ca(2+)-binding residues include Cys167 and Glu168.

It belongs to the fucolectin family. Homotrimer. As to expression, parenchymal hepatocytes.

Its subcellular location is the secreted. The protein localises to the extracellular space. Its function is as follows. Acts as a defensive agent. Recognizes blood group fucosylated oligosaccharides including A, B, H and Lewis B-type antigens. Does not recognize Lewis A antigen and has low affinity for monovalent haptens. The polypeptide is Fucolectin-1 (Anguilla japonica (Japanese eel)).